The following is a 264-amino-acid chain: Thymidylate synthase (264 aa).

Residue arginine 21 participates in dUMP binding. Residue histidine 51 coordinates (6R)-5,10-methylene-5,6,7,8-tetrahydrofolate. 126-127 (RR) contributes to the dUMP binding site. The Nucleophile role is filled by cysteine 146. Residues 166 to 169 (RSCD), asparagine 177, and 207 to 209 (HLY) each bind dUMP. Aspartate 169 contacts (6R)-5,10-methylene-5,6,7,8-tetrahydrofolate. Alanine 263 contacts (6R)-5,10-methylene-5,6,7,8-tetrahydrofolate.

It belongs to the thymidylate synthase family. Bacterial-type ThyA subfamily. Homodimer.

It is found in the cytoplasm. It carries out the reaction dUMP + (6R)-5,10-methylene-5,6,7,8-tetrahydrofolate = 7,8-dihydrofolate + dTMP. It functions in the pathway pyrimidine metabolism; dTTP biosynthesis. Functionally, catalyzes the reductive methylation of 2'-deoxyuridine-5'-monophosphate (dUMP) to 2'-deoxythymidine-5'-monophosphate (dTMP) while utilizing 5,10-methylenetetrahydrofolate (mTHF) as the methyl donor and reductant in the reaction, yielding dihydrofolate (DHF) as a by-product. This enzymatic reaction provides an intracellular de novo source of dTMP, an essential precursor for DNA biosynthesis. This Xenorhabdus nematophila (strain ATCC 19061 / DSM 3370 / CCUG 14189 / LMG 1036 / NCIMB 9965 / AN6) protein is Thymidylate synthase.